We begin with the raw amino-acid sequence, 336 residues long: Phosphate acyltransferase (336 aa).

This sequence belongs to the PlsX family. Homodimer. Probably interacts with PlsY.

The protein resides in the cytoplasm. The catalysed reaction is a fatty acyl-[ACP] + phosphate = an acyl phosphate + holo-[ACP]. The protein operates within lipid metabolism; phospholipid metabolism. Its function is as follows. Catalyzes the reversible formation of acyl-phosphate (acyl-PO(4)) from acyl-[acyl-carrier-protein] (acyl-ACP). This enzyme utilizes acyl-ACP as fatty acyl donor, but not acyl-CoA. In Pseudomonas paraeruginosa (strain DSM 24068 / PA7) (Pseudomonas aeruginosa (strain PA7)), this protein is Phosphate acyltransferase.